The following is a 223-amino-acid chain: MQAALKLQSDDARPLQILIVDDHPVVAEGWGRIIRTKTACEIASAPSASEGWRAWRQARPDLMVVDLSIGRNKIAGIRLIERLRRVDPDLPILVFTMHRSPVLARRALMFGANGIINKDSPPAEICAAFTEVARGGNYVDSRLAMQIALLNVSRPGTSAPRLTGREEEILGMITEGMSYRDIADRACISYKTVSNVSLVLKDKLGAANLADLVVKGIRYFEGD.

Residues 16–133 enclose the Response regulatory domain; sequence QILIVDDHPV…EICAAFTEVA (118 aa). An HTH luxR-type domain is found at 155 to 220; it reads PGTSAPRLTG…DLVVKGIRYF (66 aa). Residues 179 to 198 constitute a DNA-binding region (H-T-H motif); the sequence is YRDIADRACISYKTVSNVSL.

Post-translationally, phosphorylated by MoxY.

It localises to the cytoplasm. Member of the two-component regulatory system MoxY/MoxX probably involved in the regulation of the methanol dehydrogenase expression. In Paracoccus denitrificans, this protein is Methanol utilization control regulatory protein MoxX (moxX).